Consider the following 490-residue polypeptide: Dual specificity protein kinase CLK3 (490 aa).

The segment at 1–138 (MHHCKRYRSP…SKRSSRSVED (138 aa)) is disordered. Residue tyrosine 7 is modified to Phosphotyrosine. Serine 9, serine 49, serine 51, serine 67, serine 76, and serine 78 each carry phosphoserine. 2 stretches are compositionally biased toward basic and acidic residues: residues 26–56 (YSRE…DRIP) and 63–76 (EHRD…EERS). The span at 88-116 (RSRHRRRSRERGPYRTRKHAHHCHKRRTR) shows a compositional bias: basic residues. Residues 117 to 130 (SCSSASSRSQQSSK) are compositionally biased toward low complexity. Serine 135 is modified (phosphoserine). The 317-residue stretch at 156-472 (YEIVGNLGEG…LAEALLHPFF (317 aa)) folds into the Protein kinase domain. Residues 162-170 (LGEGTFGKV) and lysine 186 each bind ATP. Aspartate 283 functions as the Proton acceptor in the catalytic mechanism.

This sequence belongs to the protein kinase superfamily. CMGC Ser/Thr protein kinase family. Lammer subfamily. In terms of processing, autophosphorylates on all three types of residues.

The protein localises to the nucleus. It is found in the cytoplasm. Its subcellular location is the cytoplasmic vesicle. It localises to the secretory vesicle. The protein resides in the acrosome. The catalysed reaction is L-seryl-[protein] + ATP = O-phospho-L-seryl-[protein] + ADP + H(+). It catalyses the reaction L-threonyl-[protein] + ATP = O-phospho-L-threonyl-[protein] + ADP + H(+). It carries out the reaction L-tyrosyl-[protein] + ATP = O-phospho-L-tyrosyl-[protein] + ADP + H(+). With respect to regulation, leucettine L41 inhibits its kinase activity and affects the regulation of alternative splicing mediated by phosphorylation of SR proteins. In terms of biological role, dual specificity kinase acting on both serine/threonine and tyrosine-containing substrates. Phosphorylates serine- and arginine-rich (SR) proteins of the spliceosomal complex. May be a constituent of a network of regulatory mechanisms that enable SR proteins to control RNA splicing and can cause redistribution of SR proteins from speckles to a diffuse nucleoplasmic distribution. Phosphorylates SRSF1 and SRSF3. Regulates the alternative splicing of tissue factor (F3) pre-mRNA in endothelial cells. This Rattus norvegicus (Rat) protein is Dual specificity protein kinase CLK3 (Clk3).